A 243-amino-acid chain; its full sequence is MAAAIASSLIRQKRQARESNSDRVSASKRRSSPSKDGRSLCERHVLGVFSKVRFCSGRKRPVRRRPEPQLKGIVTRLFSQQGYFLQMHPDGTIDGTKDENSDYTLFNLIPVGLRVVAIQGVKASLYVAMNGEGYLYSSDVFTPECKFKESVFENYYVIYSSTLYRQQESGRAWFLGLNKEGQIMKGNRVKKTKPSSHFVPKPIEVCMYREPSLHEIGEKQGRSRKSSGTPTMNGGKVVNQDST.

Disordered stretches follow at residues Met1–Ser39 and Ile216–Thr243. A Bipartite nuclear localization signal motif is present at residues Arg11–Arg38.

The protein belongs to the heparin-binding growth factors family. Interacts with the C-terminal region of SCN9A. In terms of tissue distribution, brain, eye and testis; highly expressed in embryonic retina, olfactory epithelium, olfactory bulb, and in a segmental pattern of the body wall; in adult olfactory bulb, less in cerebellum, deep cerebellar nuclei, cortex and multiple midbrain structures.

Its subcellular location is the nucleus. Its function is as follows. Involved in nervous system development and function. Involved in the positive regulation of voltage-gated sodium channel activity. Promotes neuronal excitability by elevating the voltage dependence of neuronal sodium channel SCN8A fast inactivation. The chain is Fibroblast growth factor 12 (FGF12) from Homo sapiens (Human).